The chain runs to 258 residues: Thiamine thiazole synthase (258 aa).

Residues Ser-36, 55 to 56 (ER), Gly-63, Val-127, and 153 to 155 (HVD) each bind NAD(+). Fe cation-binding residues include Asp-155 and His-170. Met-224 provides a ligand contact to NAD(+). Arg-234 lines the glycine pocket.

This sequence belongs to the THI4 family. Homooctamer; tetramer of dimers. Requires Fe(2+) as cofactor.

The enzyme catalyses hydrogen sulfide + glycine + NAD(+) = ADP-5-ethyl-4-methylthiazole-2-carboxylate + nicotinamide + 3 H2O + H(+). The protein operates within cofactor biosynthesis; thiamine diphosphate biosynthesis. In terms of biological role, involved in the biosynthesis of the thiazole moiety of thiamine. Catalyzes the conversion of NAD and glycine to adenosine diphosphate 5-(2-hydroxyethyl)-4-methylthiazole-2-carboxylate (ADT), an adenylated thiazole intermediate, using free sulfide as a source of sulfur. This Desulfosudis oleivorans (strain DSM 6200 / JCM 39069 / Hxd3) (Desulfococcus oleovorans) protein is Thiamine thiazole synthase.